The chain runs to 761 residues: 5-methyltetrahydropteroyltriglutamate--homocysteine methyltransferase (761 aa).

Residues 16-19 (RELK) and K116 each bind 5-methyltetrahydropteroyltri-L-glutamate. L-homocysteine contacts are provided by residues 435–437 (IGS) and E488. Residues 435 to 437 (IGS) and E488 each bind L-methionine. 5-methyltetrahydropteroyltri-L-glutamate-binding positions include 519-520 (RC) and W565. D603 contacts L-homocysteine. L-methionine is bound at residue D603. E609 serves as a coordination point for 5-methyltetrahydropteroyltri-L-glutamate. Residues H645, C647, and E669 each contribute to the Zn(2+) site. The active-site Proton donor is the H698. Residue C730 coordinates Zn(2+).

Belongs to the vitamin-B12 independent methionine synthase family. Zn(2+) is required as a cofactor.

It catalyses the reaction 5-methyltetrahydropteroyltri-L-glutamate + L-homocysteine = tetrahydropteroyltri-L-glutamate + L-methionine. The protein operates within amino-acid biosynthesis; L-methionine biosynthesis via de novo pathway; L-methionine from L-homocysteine (MetE route): step 1/1. In terms of biological role, catalyzes the transfer of a methyl group from 5-methyltetrahydrofolate to homocysteine resulting in methionine formation. This chain is 5-methyltetrahydropteroyltriglutamate--homocysteine methyltransferase, found in Hahella chejuensis (strain KCTC 2396).